We begin with the raw amino-acid sequence, 84 residues long: Cell division topological specificity factor (84 aa).

The protein belongs to the MinE family.

Prevents the cell division inhibition by proteins MinC and MinD at internal division sites while permitting inhibition at polar sites. This ensures cell division at the proper site by restricting the formation of a division septum at the midpoint of the long axis of the cell. In Burkholderia ambifaria (strain MC40-6), this protein is Cell division topological specificity factor.